A 178-amino-acid polypeptide reads, in one-letter code: ATP-dependent protease subunit HslV (178 aa).

Residue T7 is part of the active site. Na(+) contacts are provided by G162, C165, and T168.

The protein belongs to the peptidase T1B family. HslV subfamily. In terms of assembly, a double ring-shaped homohexamer of HslV is capped on each side by a ring-shaped HslU homohexamer. The assembly of the HslU/HslV complex is dependent on binding of ATP.

Its subcellular location is the cytoplasm. The enzyme catalyses ATP-dependent cleavage of peptide bonds with broad specificity.. Allosterically activated by HslU binding. Its function is as follows. Protease subunit of a proteasome-like degradation complex believed to be a general protein degrading machinery. This Cupriavidus pinatubonensis (strain JMP 134 / LMG 1197) (Cupriavidus necator (strain JMP 134)) protein is ATP-dependent protease subunit HslV.